Reading from the N-terminus, the 194-residue chain is Leucyl/phenylalanyl-tRNA--protein transferase (194 aa).

This sequence belongs to the L/F-transferase family.

The protein resides in the cytoplasm. It catalyses the reaction N-terminal L-lysyl-[protein] + L-leucyl-tRNA(Leu) = N-terminal L-leucyl-L-lysyl-[protein] + tRNA(Leu) + H(+). The catalysed reaction is N-terminal L-arginyl-[protein] + L-leucyl-tRNA(Leu) = N-terminal L-leucyl-L-arginyl-[protein] + tRNA(Leu) + H(+). The enzyme catalyses L-phenylalanyl-tRNA(Phe) + an N-terminal L-alpha-aminoacyl-[protein] = an N-terminal L-phenylalanyl-L-alpha-aminoacyl-[protein] + tRNA(Phe). Functionally, functions in the N-end rule pathway of protein degradation where it conjugates Leu, Phe and, less efficiently, Met from aminoacyl-tRNAs to the N-termini of proteins containing an N-terminal arginine or lysine. The polypeptide is Leucyl/phenylalanyl-tRNA--protein transferase (Prosthecochloris aestuarii (strain DSM 271 / SK 413)).